The chain runs to 335 residues: Basic endochitinase B (335 aa).

An N-terminal signal peptide occupies residues 1–33 (MPPQKENHRTLNKMKTNLFLFLIFSLLLSLSSA). One can recognise a Chitin-binding type-1 domain in the interval 34 to 75 (EQCGRQAGGALCPNGLCCSEFGWCGNTEPYCKQPGCQSQCTP). Intrachain disulfides connect Cys-36/Cys-51, Cys-45/Cys-57, Cys-50/Cys-64, Cys-69/Cys-73, Cys-107/Cys-169, Cys-181/Cys-189, and Cys-288/Cys-320. Glu-151 serves as the catalytic Proton donor. The propeptide at 329 to 335 (GLLEAAI) is removed in mature form. The Vacuolar targeting signal signature appears at 329–335 (GLLEAAI).

Belongs to the glycosyl hydrolase 19 family. Chitinase class I subfamily. In terms of tissue distribution, high constitutive level in roots with lower levels in leaves and flowering shoots.

The protein resides in the vacuole. The enzyme catalyses Random endo-hydrolysis of N-acetyl-beta-D-glucosaminide (1-&gt;4)-beta-linkages in chitin and chitodextrins.. Functionally, defense against chitin-containing fungal pathogens. Seems particularly implicated in resistance to jasmonate-inducing pathogens such as A.brassicicola. In vitro antifungal activity against T.reesei, but not against A.solani, F.oxysporum, S.sclerotiorum, G.graminis and P.megasperma. The chain is Basic endochitinase B (CHI-B) from Arabidopsis thaliana (Mouse-ear cress).